The sequence spans 233 residues: Uracil-DNA glycosylase (233 aa).

The active-site Proton acceptor is the D70.

Belongs to the uracil-DNA glycosylase (UDG) superfamily. UNG family.

The protein localises to the cytoplasm. It catalyses the reaction Hydrolyzes single-stranded DNA or mismatched double-stranded DNA and polynucleotides, releasing free uracil.. In terms of biological role, excises uracil residues from the DNA which can arise as a result of misincorporation of dUMP residues by DNA polymerase or due to deamination of cytosine. This is Uracil-DNA glycosylase from Helicobacter acinonychis (strain Sheeba).